Reading from the N-terminus, the 703-residue chain is Elongation factor G (703 aa).

One can recognise a tr-type G domain in the interval 10 to 286; sequence NKVRNIGIMA…AVVKFLPSPL (277 aa). GTP-binding positions include 19-26, 83-87, and 137-140; these read AHIDAGKT, DTPGH, and NKLD.

The protein belongs to the TRAFAC class translation factor GTPase superfamily. Classic translation factor GTPase family. EF-G/EF-2 subfamily.

It localises to the cytoplasm. In terms of biological role, catalyzes the GTP-dependent ribosomal translocation step during translation elongation. During this step, the ribosome changes from the pre-translocational (PRE) to the post-translocational (POST) state as the newly formed A-site-bound peptidyl-tRNA and P-site-bound deacylated tRNA move to the P and E sites, respectively. Catalyzes the coordinated movement of the two tRNA molecules, the mRNA and conformational changes in the ribosome. This Nocardioides sp. (strain ATCC BAA-499 / JS614) protein is Elongation factor G.